We begin with the raw amino-acid sequence, 209 residues long: Ras-like GTP-binding protein RYL2 (209 aa).

Residue 12 to 19 (GAQGVGKT) coordinates GTP. An Effector region motif is present at residues 34 to 42 (QASTIGASF). GTP contacts are provided by residues 60–64 (DTAGQ) and 118–121 (TKVD). 2 S-geranylgeranyl cysteine lipidation sites follow: cysteine 208 and cysteine 209.

It belongs to the small GTPase superfamily. Rab family.

It is found in the cell membrane. Functionally, protein transport. Probably involved in vesicular traffic. The chain is Ras-like GTP-binding protein RYL2 (RYL2) from Yarrowia lipolytica (strain CLIB 122 / E 150) (Yeast).